The following is a 154-amino-acid chain: MutT-like protein (154 aa).

The region spanning 15–136 is the Nudix hydrolase domain; the sequence is PLHSVSVAGV…YAIRLLDALD (122 aa). Mg(2+) contacts are provided by Gly-48, Glu-63, Glu-66, and Glu-67. A Nudix box motif is present at residues 48 to 69; it reads GVLELDETPETGVAREVWEETG.

This sequence belongs to the Nudix hydrolase family.

The sequence is that of MutT-like protein from Streptomyces ambofaciens.